The chain runs to 316 residues: Glutathione synthetase (316 aa).

One can recognise an ATP-grasp domain in the interval 123 to 309 (NEKISTLSFK…ISGILLDSIE (187 aa)). 149–206 (FQEKFGDIILKPINKMGGDSVFYVKKNDPNVSVIIDQLTNYGNSFCLIQEYIKEILNG) provides a ligand contact to ATP. Positions 280 and 282 each coordinate Mg(2+).

Belongs to the prokaryotic GSH synthase family. Requires Mg(2+) as cofactor. Mn(2+) serves as cofactor.

It carries out the reaction gamma-L-glutamyl-L-cysteine + glycine + ATP = glutathione + ADP + phosphate + H(+). It participates in sulfur metabolism; glutathione biosynthesis; glutathione from L-cysteine and L-glutamate: step 2/2. The protein is Glutathione synthetase of Wigglesworthia glossinidia brevipalpis.